Consider the following 164-residue polypeptide: UPF0304 protein MS2240 (164 aa).

This sequence belongs to the UPF0304 family.

This Mannheimia succiniciproducens (strain KCTC 0769BP / MBEL55E) protein is UPF0304 protein MS2240.